The primary structure comprises 176 residues: Glycine-rich RNA-binding protein 7 (176 aa).

Position 2 is an N-acetylalanine (Ala2). The segment at 2 to 41 (ASGDVEYRCFVGGLAWATDDRALETAFAQYGDVIDSKIIN) is required for RNA chaperone activity. The RRM domain occupies 8–86 (YRCFVGGLAW…RSITVNEAQS (79 aa)). Arg49 carries the post-translational modification ADP-ribosylarginine; by HopU1. A disordered region spans residues 83-103 (EAQSRGSGGGGGHRGGGGGGY). Residues 88-103 (GSGGGGGHRGGGGGGY) show a composition bias toward gly residues. The tract at residues 88 to 175 (GSGGGGGHRG…GYGGSGGGGG (88 aa)) is glycine-rich (GR) required for cell-to-cell movement. Residues 97-148 (GGGGGGYRSGGGGGYSGGGGSYGGGGGRREGGGGYSGGGGGYSSRGGGGGSY) form a nuclear targeting sequence (M9) region. Ser105 and Ser117 each carry phosphoserine. Positions 131–176 (YSGGGGGYSSRGGGGGSYGGGRREGGGGYGGGEGGGYGGSGGGGGW) are disordered.

This sequence belongs to the GR-RBP family. In terms of assembly, interacts with TRN1. Interacts with the Pseudomonas syringae type III effector HopU1. Binds to small phloem-mobile single-stranded RNAs (ss-sRNA, e.g. small interfering RNA (siRNA) and microRNA (miRNA)) in the phloeme exudate, including viral-derived sRNA (vsiRNA). In terms of processing, ADP-ribosylated by the Pseudomonas syringae type III effector HopU1. ADP-ribosylation reduces the ability of the protein to bind RNA. Ubiquitous with strong expression in guard cell.

It is found in the cytoplasm. The protein localises to the nucleus. The protein resides in the secreted. Plays a role in RNA transcription or processing during stress. Binds RNAs and DNAs sequence with a preference to single-stranded nucleic acids. Displays strong affinity to poly(U) and poly(G) sequence. Involved in mRNA alternative splicing of numerous targets by modulating splice site selection. Negatively regulates the circadian oscillations of its own transcript as well as RBG8 transcript. Forms an interlocked post-transcriptional negative feedback loop with the RBG8 autoregulatory circuit. Both proteins negatively autoregulate and reciprocally crossregulate by binding to their pre-mRNAs and promoting unproductive splicing coupled to degradation via the NMD pathway. Involved in the regulation of abscisic acid and stress responses. Affects the growth and stress tolerance under high salt and dehydration stress conditions, and also confers freezing tolerance, particularly via the regulation of stomatal opening and closing in the guard cells. Exhibits RNA chaperone activity during the cold adaptation process. Involved in the export of mRNAs from the nucleus to the cytoplasm under cold stress conditions. Target of the Pseudomonas syringae type III effector HopU1, which could probably be involved in plant innate immunity. Component of the flowering autonomous pathway which promotes floral transition, at least partly by down-regulating FLC. Mediates cell-to-cell trafficking of RNA interference (RNAi) signals (small RNAs (sRNA), e.g. small interfering RNA (siRNA) and microRNA (miRNA)) which regulate growth and development, as well as responses to environmental inputs, including pathogen attack; can compromise zucchini yellow mosaic virus (ZYMV) and tobacco rattle virus (TRV) infections at the early stage. This chain is Glycine-rich RNA-binding protein 7, found in Arabidopsis thaliana (Mouse-ear cress).